Consider the following 359-residue polypeptide: Protein mab-21-like 2 (359 aa).

Belongs to the mab-21 family. As to expression, expressed in the adult cerebellum and eye, with lower levels in the adult forebrain. In embryos at 10.5 days post-coitum strongly expressed in the rostral and distal regions of the developing neural retina, with no expression immediately adjacent to the closing optic fissure. Expression is also observed in the dorsal and ventral aspects of the developing forelimb bud and in the developing pharyngeal arches, as well as in the midbrain.

Its subcellular location is the nucleus. The protein resides in the cytoplasm. Functionally, required for several aspects of embryonic development including normal development of the eye, notochord, neural tube and other organ tissues, and for embryonic turning. This Mus musculus (Mouse) protein is Protein mab-21-like 2 (Mab21l2).